The following is a 273-amino-acid chain: Testis-specific serine/threonine-protein kinase 6 (273 aa).

A Protein kinase domain is found at 12–267 (YKLGRTIGEG…AGQVARNGWL (256 aa)). ATP-binding positions include 18–26 (IGEGSYSKV) and Lys41. The active-site Proton acceptor is Asp135.

This sequence belongs to the protein kinase superfamily. CAMK Ser/Thr protein kinase family. As to quaternary structure, microtubule inner protein component of sperm flagellar doublet microtubules. Interacts with HSP90; this interaction stabilizes and activates TSSK6. Interacts with the heat shock proteins HSPCB, HSPA8 and HSPA1A. These interactions appear to be required for TSSK6 kinase activity. Interacts with TSACC; this interaction is direct and recruits TSACC to HSP90, which is essential for kinase activity. It depends on Mg(2+) as a cofactor. Post-translationally, autophosphorylated. In terms of processing, ubiquitinated; HSP90 activity negatively regulates ubiquitination and degradation. Expressed in the testis, localized to the heads of elongating spermatids.

The protein localises to the cytoplasm. It localises to the cytoskeleton. Its subcellular location is the flagellum axoneme. It is found in the nucleus. The catalysed reaction is L-seryl-[protein] + ATP = O-phospho-L-seryl-[protein] + ADP + H(+). The enzyme catalyses L-threonyl-[protein] + ATP = O-phospho-L-threonyl-[protein] + ADP + H(+). Functionally, serine/threonine-protein kinase component of the sperm flagellar doublet microtubules. May act as a regulator of sperm motility by mediating phosphorylation of sperm doublet microtubule proteins. Plays a role in DNA condensation during postmeiotic chromatin remodeling and histone-to-protamine transition during spermatogenesis. The chain is Testis-specific serine/threonine-protein kinase 6 from Mus musculus (Mouse).